A 365-amino-acid chain; its full sequence is Flagellar P-ring protein 2 (365 aa).

Positions Met-1–Ser-19 are cleaved as a signal peptide.

It belongs to the FlgI family. The basal body constitutes a major portion of the flagellar organelle and consists of four rings (L,P,S, and M) mounted on a central rod.

It is found in the periplasm. Its subcellular location is the bacterial flagellum basal body. Functionally, assembles around the rod to form the L-ring and probably protects the motor/basal body from shearing forces during rotation. In Chromobacterium violaceum (strain ATCC 12472 / DSM 30191 / JCM 1249 / CCUG 213 / NBRC 12614 / NCIMB 9131 / NCTC 9757 / MK), this protein is Flagellar P-ring protein 2.